A 235-amino-acid chain; its full sequence is Large ribosomal subunit protein uL1c (235 aa).

The protein belongs to the universal ribosomal protein uL1 family. As to quaternary structure, part of the 50S ribosomal subunit.

The protein localises to the plastid. It localises to the chloroplast. Functionally, binds directly to 23S rRNA. Might be involved in E site tRNA release (Potential). This chain is Large ribosomal subunit protein uL1c (rpl1), found in Gracilaria tenuistipitata var. liui (Red alga).